A 153-amino-acid polypeptide reads, in one-letter code: Pheromone-binding protein Gp-9 (153 aa).

The N-terminal stretch at 1-19 (MKTFVLHIFIFALVAFASA) is a signal peptide. 3 disulfides stabilise this stretch: Cys-37-Cys-77, Cys-73-Cys-129, and Cys-118-Cys-138.

Belongs to the PBP/GOBP family. In terms of assembly, homodimer.

The protein resides in the secreted. Colony queen number, a major feature of social organization, is associated with worker genotype for Gp-9. Colonies are headed by either a single reproductive queen (monogyne form) or multiple queens (polygyne form). Differences in worker Gp-9 genotypes between social forms may cause differences in workers' abilities to recognize queens and regulate their numbers. This chain is Pheromone-binding protein Gp-9, found in Solenopsis saevissima (Fire ant).